The following is a 2568-amino-acid chain: Highly reducing polyketide synthase resH (2568 aa).

The Ketosynthase family 3 (KS3) domain occupies 9 to 437 (PEPIAIVGMA…GANAHAILDA (429 aa)). Active-site for beta-ketoacyl synthase activity residues include Cys184, His319, and His359. A Malonyl-CoA:ACP transacylase (MAT) domain is found at 549–877 (FIFTGQGAQW…KLAGSLFLSG (329 aa)). Residues 942–1081 (HDLLGSRLPG…TNDQLLWPDD (140 aa)) form an N-terminal hotdog fold region. The PKS/mFAS DH domain maps to 942-1244 (HDLLGSRLPG…FSSLETASSD (303 aa)). The Proton acceptor; for dehydratase activity role is filled by His974. The segment at 1091–1244 (NKDSYDRRWY…FSSLETASSD (154 aa)) is C-terminal hotdog fold. The Proton donor; for dehydratase activity role is filled by Asp1156. The segment at 1295 to 1595 (VTRLAIRSSA…SGADVVLDDY (301 aa)) is methyltransferase (CMet) domain. Residues 1853–2154 (GRLDSFYFKE…QEDSVGLAVL (302 aa)) enclose the Enoyl reductase (ER) domain. In terms of domain architecture, Ketoreductase (KR) spans 2177–2357 (ASYLLIGCLG…QATSIALGMI (181 aa)). The 79-residue stretch at 2485–2563 (AVKSAILGLI…GLADQVVSLA (79 aa)) folds into the Carrier domain. Ser2522 carries the O-(pantetheine 4'-phosphoryl)serine modification.

It depends on pantetheine 4'-phosphate as a cofactor.

It participates in antifungal biosynthesis. Highly reducing polyketide synthase; part of the gene cluster that mediates the biosynthesis of the tetrahydropyranyl antifungal agent restricticin that acts as an inhibitor of CYP51 and blocks the ergosterol biosynthesis. The highly reducing polyketide synthase resH, the short chain dehydrogenase resG, the cyclase resF, the FAD-dependent monooxygenase resA and the enoylreductase resD are required to generate the first stable intermediate desmethylrestrictinol. ResH with resD biosynthesize the first polyketide chain intermediate that is reduced by resG, followed by epoxidation by resA before 6-endo cyclization via epoxide opening by resF leads to desmethylrestrictinol. The methyltransferase resE then catalyzes the C4 O-methylation of desmethylrestrictinol to produce restrictinol, and the nonribosomal peptide synthetase resC catalyzes the C3 esterification of restrictinol with glycine that leads to restricticin. This is Highly reducing polyketide synthase resH from Aspergillus sclerotiorum.